We begin with the raw amino-acid sequence, 54 residues long: Large ribosomal subunit protein bL33 (54 aa).

It belongs to the bacterial ribosomal protein bL33 family.

The sequence is that of Large ribosomal subunit protein bL33 from Symbiobacterium thermophilum (strain DSM 24528 / JCM 14929 / IAM 14863 / T).